Here is a 263-residue protein sequence, read N- to C-terminus: tRNA1(Val) (adenine(37)-N6)-methyltransferase (263 aa).

The protein belongs to the methyltransferase superfamily. tRNA (adenine-N(6)-)-methyltransferase family.

It localises to the cytoplasm. It carries out the reaction adenosine(37) in tRNA1(Val) + S-adenosyl-L-methionine = N(6)-methyladenosine(37) in tRNA1(Val) + S-adenosyl-L-homocysteine + H(+). Functionally, specifically methylates the adenine in position 37 of tRNA(1)(Val) (anticodon cmo5UAC). The chain is tRNA1(Val) (adenine(37)-N6)-methyltransferase from Salmonella choleraesuis (strain SC-B67).